Consider the following 269-residue polypeptide: Hydroxyethylthiazole kinase (269 aa).

Methionine 45 is a substrate binding site. ATP-binding residues include arginine 121 and threonine 167. Glycine 194 contributes to the substrate binding site.

Belongs to the Thz kinase family. The cofactor is Mg(2+).

It carries out the reaction 5-(2-hydroxyethyl)-4-methylthiazole + ATP = 4-methyl-5-(2-phosphooxyethyl)-thiazole + ADP + H(+). It functions in the pathway cofactor biosynthesis; thiamine diphosphate biosynthesis; 4-methyl-5-(2-phosphoethyl)-thiazole from 5-(2-hydroxyethyl)-4-methylthiazole: step 1/1. Functionally, catalyzes the phosphorylation of the hydroxyl group of 4-methyl-5-beta-hydroxyethylthiazole (THZ). In Geobacillus sp. (strain WCH70), this protein is Hydroxyethylthiazole kinase.